A 135-amino-acid chain; its full sequence is L-alanine exporter AlaE (135 aa).

Transmembrane regions (helical) follow at residues 9–29 (VATVIFFTAVATFSELLIAGM), 75–95 (DILAFLSFQAPVYGATLLIAG), and 96–116 (ASFAEAGTAIGSAIILMILLA).

The protein belongs to the AlaE exporter family.

The protein localises to the cell inner membrane. In terms of biological role, exports L-alanine. In Cereibacter sphaeroides (strain ATCC 17023 / DSM 158 / JCM 6121 / CCUG 31486 / LMG 2827 / NBRC 12203 / NCIMB 8253 / ATH 2.4.1.) (Rhodobacter sphaeroides), this protein is L-alanine exporter AlaE.